The sequence spans 485 residues: Probable cobyric acid synthase (485 aa).

Residues 250-435 (EIEIAVIRLP…LHGLFDNKNI (186 aa)) enclose the GATase cobBQ-type domain. Residue Cys328 is the Nucleophile of the active site. Residue His427 is part of the active site.

Belongs to the CobB/CobQ family. CobQ subfamily.

It participates in cofactor biosynthesis; adenosylcobalamin biosynthesis. Its function is as follows. Catalyzes amidations at positions B, D, E, and G on adenosylcobyrinic A,C-diamide. NH(2) groups are provided by glutamine, and one molecule of ATP is hydrogenolyzed for each amidation. The polypeptide is Probable cobyric acid synthase (Methanosarcina barkeri (strain Fusaro / DSM 804)).